The primary structure comprises 422 residues: Probable protein phosphatase 2C 69 (422 aa).

The PPM-type phosphatase domain maps to 45 to 294 (TLLLAEAGER…DDTTCIVVDI (250 aa)). Mn(2+) contacts are provided by aspartate 70, glycine 71, aspartate 246, and aspartate 285.

Belongs to the PP2C family. Requires Mg(2+) as cofactor. It depends on Mn(2+) as a cofactor.

It carries out the reaction O-phospho-L-seryl-[protein] + H2O = L-seryl-[protein] + phosphate. The catalysed reaction is O-phospho-L-threonyl-[protein] + H2O = L-threonyl-[protein] + phosphate. The polypeptide is Probable protein phosphatase 2C 69 (Oryza sativa subsp. japonica (Rice)).